The primary structure comprises 283 residues: Bifunctional protein FolD (283 aa).

Residues G165–S167 and S190 each bind NADP(+).

Belongs to the tetrahydrofolate dehydrogenase/cyclohydrolase family. Homodimer.

The catalysed reaction is (6R)-5,10-methylene-5,6,7,8-tetrahydrofolate + NADP(+) = (6R)-5,10-methenyltetrahydrofolate + NADPH. The enzyme catalyses (6R)-5,10-methenyltetrahydrofolate + H2O = (6R)-10-formyltetrahydrofolate + H(+). Its pathway is one-carbon metabolism; tetrahydrofolate interconversion. Its function is as follows. Catalyzes the oxidation of 5,10-methylenetetrahydrofolate to 5,10-methenyltetrahydrofolate and then the hydrolysis of 5,10-methenyltetrahydrofolate to 10-formyltetrahydrofolate. The chain is Bifunctional protein FolD from Paracidovorax citrulli (strain AAC00-1) (Acidovorax citrulli).